Consider the following 993-residue polypeptide: Replication protein 1a (993 aa).

The tract at residues 51–409 (NVLGVKDSEV…TIVINGMSMQ (359 aa)) is methyltransferase. One can recognise an Alphavirus-like MT domain in the interval 72–290 (HLTQQEFAPH…HDWENIRSFL (219 aa)). Positions 543–576 (EVSDRPEAPSPTPDDPADVCGKEQEVSELDSLSA) are disordered. One can recognise a (+)RNA virus helicase ATP-binding domain in the interval 684-838 (NSECVVCNNE…KIIPDETSDA (155 aa)). Residues 712–975 (VDGVAGCGKT…LTRHKVTFRY (264 aa)) are ATP-dependent helicase. 714–721 (GVAGCGKT) contacts ATP. The (+)RNA virus helicase C-terminal domain occupies 839 to 993 (DTTFRSPQDV…DLIAECIARA (155 aa)).

The protein belongs to the bromoviridae replication protein 1a family. In terms of assembly, interacts with RNA-directed RNA polymerase 2a.

The protein resides in the host endoplasmic reticulum membrane. Its function is as follows. Involved in the virus replication. Contains a helicase domain and a methyltransferase domain. The methyltransferase domain is probably involved in viral RNA capping. Involved in the formation of ER membrane spherular invaginations in which RNA replication complexes form. The chain is Replication protein 1a from Cucumber mosaic virus (strain Ixora) (CMV).